Here is a 732-residue protein sequence, read N- to C-terminus: Copper-transporting ATPase (732 aa).

The Cytoplasmic segment spans residues Met1–Lys88. The region spanning Thr2–Arg68 is the HMA domain. Residues Cys13 and Cys16 each contribute to the Cu(+) site. Residues Leu89–Leu109 traverse the membrane as a helical segment. Residues Pro110–Gly122 lie on the Extracellular side of the membrane. Residues Ile123–His142 form a helical membrane-spanning segment. Topologically, residues Gly143–Ala149 are cytoplasmic. A helical transmembrane segment spans residues Arg150–Leu170. Topologically, residues Val171 to Phe187 are extracellular. Residues Glu188–Lys208 traverse the membrane as a helical segment. At Asp209–Lys336 the chain is on the cytoplasmic side. A helical membrane pass occupies residues Val337–Leu359. The Extracellular segment spans residues Gly360–Ala365. Residues Leu366–Leu383 traverse the membrane as a helical segment. Residues Ala384 to Ile663 lie on the Cytoplasmic side of the membrane. The active-site 4-aspartylphosphate intermediate is Asp421. 2 residues coordinate Mg(2+): Asp609 and Asp613. A helical membrane pass occupies residues Lys664–Gly683. The Extracellular segment spans residues Val684–Pro694. Residues Met695–Gln713 traverse the membrane as a helical segment. Residues Arg714 to Ser732 lie on the Cytoplasmic side of the membrane.

Belongs to the cation transport ATPase (P-type) (TC 3.A.3) family. Type IB subfamily.

The protein localises to the cell membrane. It carries out the reaction Cu(+)(in) + ATP + H2O = Cu(+)(out) + ADP + phosphate + H(+). Its function is as follows. Probably involved in copper export. The polypeptide is Copper-transporting ATPase (copA) (Helicobacter felis (strain ATCC 49179 / CCUG 28539 / NCTC 12436 / CS1)).